A 456-amino-acid polypeptide reads, in one-letter code: Hydroxyproline dehydrogenase (456 aa).

N6-acetyllysine is present on residues lysine 310 and lysine 320.

This sequence belongs to the proline oxidase family. FAD is required as a cofactor.

The enzyme catalyses trans-4-hydroxy-L-proline + a quinone = (3R,5S)-1-pyrroline-3-hydroxy-5-carboxylate + a quinol + H(+). It carries out the reaction L-proline + a quinone = (S)-1-pyrroline-5-carboxylate + a quinol + H(+). Its function is as follows. Dehydrogenase that converts trans-4-L-hydroxyproline to delta-1-pyrroline-3-hydroxy-5-carboxylate (Hyp) using ubiquinone-10 as the terminal electron acceptor. Can also use proline as a substrate but with a very much lower efficiency. Does not react with other diastereomers of Hyp: trans-4-D-hydroxyproline and cis-4-L-hydroxyproline. Ubiquininone analogs such as menadione, duroquinone and ubiquinone-1 react more efficiently than oxygen as the terminal electron acceptor during catalysis. The chain is Hydroxyproline dehydrogenase from Mus musculus (Mouse).